We begin with the raw amino-acid sequence, 685 residues long: RING finger protein 145 (685 aa).

The next 13 helical transmembrane spans lie at 53 to 73 (YIAL…LTLP), 77 to 97 (LVQL…HQLS), 123 to 143 (FTTA…VMQT), 151 to 171 (AHLL…IVFI), 174 to 194 (FAMI…LLVP), 225 to 245 (LVLP…QIYT), 275 to 295 (YSLL…LTLC), 316 to 336 (TEGI…LQVI), 340 to 360 (FLLS…MLEI), 384 to 404 (SLCL…CQFF), 410 to 430 (LLII…TLLI), 460 to 480 (LLEF…TLFG), and 482 to 502 (WTVM…WLRA). Residues 537–575 (CSICFQDMKSAVITPCSHFFHAACLKKWLYVQETCPLCH) form an RING-type; atypical zinc finger. Positions 582 to 685 (LQPTSSPGTP…VSTSDVNCAS (104 aa)) are disordered. A compositionally biased stretch (low complexity) spans 583 to 602 (QPTSSPGTPTQGTPAANQNP). The segment covering 620-631 (EGIRAEEMKTSA) has biased composition (basic and acidic residues).

Its subcellular location is the membrane. The protein is RING finger protein 145 (rnf145) of Danio rerio (Zebrafish).